The following is an 830-amino-acid chain: Periplasmic nitrate reductase (830 aa).

Residues 1–31 (MKLSRRDFMKANAAVAAAAAAGMTIPTVAKA) constitute a signal peptide (tat-type signal). Residues 39 to 95 (IKWDKAPCRFCGTGCGVLVGTQNGRIVASQGDPDSPVNRGLNCIKGYFLPKIMYGKD) form the 4Fe-4S Mo/W bis-MGD-type domain. Residues Cys46, Cys49, Cys53, and Cys81 each coordinate [4Fe-4S] cluster. Mo-bis(molybdopterin guanine dinucleotide)-binding positions include Lys83, Gln150, Asn175, Cys179, 212-219 (WGSNMAEM), 243-247 (STYEH), 262-264 (QTD), Met372, Gln376, Asn482, 508-509 (SD), Lys531, Asp558, and 718-727 (TGRVLEHWHT). Phe794 is a binding site for substrate. 2 residues coordinate Mo-bis(molybdopterin guanine dinucleotide): Asn802 and Lys819.

Belongs to the prokaryotic molybdopterin-containing oxidoreductase family. NasA/NapA/NarB subfamily. In terms of assembly, component of the periplasmic nitrate reductase NapAB complex composed of NapA and NapB. Requires [4Fe-4S] cluster as cofactor. Mo-bis(molybdopterin guanine dinucleotide) is required as a cofactor. Predicted to be exported by the Tat system. The position of the signal peptide cleavage has not been experimentally proven.

Its subcellular location is the periplasm. It catalyses the reaction 2 Fe(II)-[cytochrome] + nitrate + 2 H(+) = 2 Fe(III)-[cytochrome] + nitrite + H2O. In terms of biological role, catalytic subunit of the periplasmic nitrate reductase complex NapAB. Receives electrons from NapB and catalyzes the reduction of nitrate to nitrite. This chain is Periplasmic nitrate reductase, found in Yersinia pseudotuberculosis serotype IB (strain PB1/+).